The chain runs to 1379 residues: DNA-directed RNA polymerase subunit beta'' (1379 aa).

Zn(2+) contacts are provided by Cys220, Cys293, Cys300, and Cys303.

Belongs to the RNA polymerase beta' chain family. RpoC2 subfamily. In terms of assembly, in plastids the minimal PEP RNA polymerase catalytic core is composed of four subunits: alpha, beta, beta', and beta''. When a (nuclear-encoded) sigma factor is associated with the core the holoenzyme is formed, which can initiate transcription. Zn(2+) is required as a cofactor.

Its subcellular location is the plastid. The protein localises to the chloroplast. It carries out the reaction RNA(n) + a ribonucleoside 5'-triphosphate = RNA(n+1) + diphosphate. In terms of biological role, DNA-dependent RNA polymerase catalyzes the transcription of DNA into RNA using the four ribonucleoside triphosphates as substrates. In Capsella bursa-pastoris (Shepherd's purse), this protein is DNA-directed RNA polymerase subunit beta''.